The chain runs to 675 residues: Methionine--tRNA ligase (675 aa).

The 'HIGH' region motif lies at 15-25; sequence PYANGSIHLGH. The Zn(2+) site is built by Cys146, Cys149, Cys159, and Cys162. The 'KMSKS' region motif lies at 332–336; it reads KMSKS. Lys335 contacts ATP. The 103-residue stretch at 573-675 folds into the tRNA-binding domain; sequence DFAKVDMRIA…SGAQPGMQVK (103 aa).

This sequence belongs to the class-I aminoacyl-tRNA synthetase family. MetG type 1 subfamily. Homodimer. Requires Zn(2+) as cofactor.

It localises to the cytoplasm. It catalyses the reaction tRNA(Met) + L-methionine + ATP = L-methionyl-tRNA(Met) + AMP + diphosphate. Functionally, is required not only for elongation of protein synthesis but also for the initiation of all mRNA translation through initiator tRNA(fMet) aminoacylation. In Yersinia pseudotuberculosis serotype O:3 (strain YPIII), this protein is Methionine--tRNA ligase.